The following is a 173-amino-acid chain: Pyrimidine operon regulatory protein (173 aa).

Substrate contacts are provided by residues 40 to 41, 97 to 105, and arginine 130; these read TR and DDVLYTGRT. Residues 93 to 105 carry the PRPP-binding motif; sequence VILVDDVLYTGRT.

It belongs to the purine/pyrimidine phosphoribosyltransferase family. PyrR subfamily.

Its function is as follows. Regulates transcriptional attenuation of the pyrimidine nucleotide (pyr) operon in response to exogenous pyrimidines, probably by binding to specific sites on pyr mRNA. This probably disrupts an antiterminator hairpin in the RNA and favors formation of a downstream transcription terminator, leading to a reduced expression of downstream genes. This Lactococcus lactis subsp. lactis (strain IL1403) (Streptococcus lactis) protein is Pyrimidine operon regulatory protein.